The chain runs to 377 residues: Glutamate 5-kinase (377 aa).

ATP is bound at residue lysine 21. Substrate is bound by residues serine 61, aspartate 149, and asparagine 161. Residues 181-182 (SD) and 223-229 (SGGMTSK) each bind ATP. A PUA domain is found at 286-363 (RGSVQVDAGA…REHEELLGYA (78 aa)).

The protein belongs to the glutamate 5-kinase family.

The protein resides in the cytoplasm. The enzyme catalyses L-glutamate + ATP = L-glutamyl 5-phosphate + ADP. It functions in the pathway amino-acid biosynthesis; L-proline biosynthesis; L-glutamate 5-semialdehyde from L-glutamate: step 1/2. Its function is as follows. Catalyzes the transfer of a phosphate group to glutamate to form L-glutamate 5-phosphate. This is Glutamate 5-kinase from Novosphingobium aromaticivorans (strain ATCC 700278 / DSM 12444 / CCUG 56034 / CIP 105152 / NBRC 16084 / F199).